The chain runs to 411 residues: Serine--tRNA ligase (411 aa).

226 to 228 (TSE) serves as a coordination point for L-serine. Position 257–259 (257–259 (RKE)) interacts with ATP. L-serine is bound at residue glutamate 280. 344-347 (EISS) is a binding site for ATP. Position 379 (serine 379) interacts with L-serine.

The protein belongs to the class-II aminoacyl-tRNA synthetase family. Type-1 seryl-tRNA synthetase subfamily. In terms of assembly, homodimer. The tRNA molecule binds across the dimer.

The protein resides in the cytoplasm. The enzyme catalyses tRNA(Ser) + L-serine + ATP = L-seryl-tRNA(Ser) + AMP + diphosphate + H(+). The catalysed reaction is tRNA(Sec) + L-serine + ATP = L-seryl-tRNA(Sec) + AMP + diphosphate + H(+). Its pathway is aminoacyl-tRNA biosynthesis; selenocysteinyl-tRNA(Sec) biosynthesis; L-seryl-tRNA(Sec) from L-serine and tRNA(Sec): step 1/1. Its function is as follows. Catalyzes the attachment of serine to tRNA(Ser). Is also able to aminoacylate tRNA(Sec) with serine, to form the misacylated tRNA L-seryl-tRNA(Sec), which will be further converted into selenocysteinyl-tRNA(Sec). The protein is Serine--tRNA ligase of Campylobacter jejuni subsp. jejuni serotype O:2 (strain ATCC 700819 / NCTC 11168).